A 424-amino-acid chain; its full sequence is Calreticulin-3 (424 aa).

The first 28 residues, 1–28 (MGLPQNKLSFFCFFFLVSVLTLAPLAFS), serve as a signal peptide directing secretion. Asparagine 97 carries an N-linked (GlcNAc...) asparagine glycan. A disulfide bridge connects residues cysteine 114 and cysteine 146. The an alpha-D-glucoside site is built by tyrosine 118, lysine 120, tyrosine 137, and aspartate 144. 7 repeat units span residues 200-211 (REFGSMYTDWDI), 219-230 (VKNAKKPEDWDD), 236-247 (DPNDVKPEGFDS), 254-265 (DRKAKEPEDWDE), 269-279 (GLWEPPKIPNS), 283-293 (GPWKAKRIKNP), and 297-307 (GKWKNPWIDNP). Residues 200–265 (REFGSMYTDW…KAKEPEDWDE (66 aa)) are 4 X approximate repeats. A compositionally biased stretch (acidic residues) spans 228–237 (WDDREYIDDP). Positions 228–275 (WDDREYIDDPNDVKPEGFDSIPREIPDRKAKEPEDWDEEENGLWEPPK) are disordered. The segment covering 238 to 260 (NDVKPEGFDSIPREIPDRKAKEP) has biased composition (basic and acidic residues). The tract at residues 269–307 (GLWEPPKIPNSAYKGPWKAKRIKNPNYKGKWKNPWIDNP) is 3 X approximate repeats. Glutamate 327 is an an alpha-D-glucoside binding site. Residues 368 to 401 (FAEAEKERKAREDEEARIAREEGERRRKERDHRY) show a composition bias toward basic and acidic residues. Residues 368-424 (FAEAEKERKAREDEEARIAREEGERRRKERDHRYGDRRRRYKRPNPRDYMDDYHDEL) are disordered. Basic residues predominate over residues 402-411 (GDRRRRYKRP). Residues 412 to 424 (NPRDYMDDYHDEL) show a composition bias toward basic and acidic residues. The Prevents secretion from ER motif lies at 421–424 (HDEL).

This sequence belongs to the calreticulin family.

The protein resides in the endoplasmic reticulum lumen. In terms of biological role, molecular calcium-binding chaperone promoting folding, oligomeric assembly and quality control in the ER via the calreticulin/calnexin cycle. This lectin may interact transiently with almost all of the monoglucosylated glycoproteins that are synthesized in the ER. Required for elongation factor Tu receptor (EFR) accumulation and for EFR, but not flagellin-sensing 2 (FLS2) signaling. The protein is Calreticulin-3 (CRT3) of Arabidopsis thaliana (Mouse-ear cress).